Consider the following 146-residue polypeptide: MPTQSKHASINIGLIQAREALMTQFRPILNQANITDQQWRIIRLLAENGTLDFQDLANQACILRPSLTGILTRLEKAGLVVRLKPSNDQRRVYLKLTSEGEKLYEEIGEEVDERYDAIEEVLGREKMLLLKDLLAELAKIEDALNS.

The region spanning 7–139 (HASINIGLIQ…LKDLLAELAK (133 aa)) is the HTH marR-type domain. The segment at residues 53 to 76 (FQDLANQACILRPSLTGILTRLEK) is a DNA-binding region (H-T-H motif).

Repressor activity requires the presence of the Integration Host Factor (IHF), which binds to sequences located between FarR binding sites A and C. IHF binding to the promoter region stabilizes the binding of FarR to its binding sites A and C and as a consequence, enhances repression of the farAB operon. Functionally, negatively controls expression of the farAB operon by binding directly to the farAB promoter region. Binds to three sites (sites A, B and C) within the DNA sequence upstream of farA. Also represses its own expression. The sequence is that of HTH-type transcriptional regulator FarR from Neisseria gonorrhoeae.